Reading from the N-terminus, the 210-residue chain is Guanylate kinase (210 aa).

The 179-residue stretch at 5 to 183 (GILFVISAPS…AVEEFKSIIL (179 aa)) folds into the Guanylate kinase-like domain. 12 to 19 (APSGAGKT) serves as a coordination point for ATP.

It belongs to the guanylate kinase family.

The protein resides in the cytoplasm. The enzyme catalyses GMP + ATP = GDP + ADP. In terms of biological role, essential for recycling GMP and indirectly, cGMP. This is Guanylate kinase from Syntrophotalea carbinolica (strain DSM 2380 / NBRC 103641 / GraBd1) (Pelobacter carbinolicus).